The following is a 245-amino-acid chain: Adenylate kinase (245 aa).

ATP is bound at residue 15–20 (GSGKGT). The segment at 35–64 (SSGDLLRGAVSKDTPLSQEIKSYLDQGKLL) is NMP. Residues S36, R41, 62-64 (KLL), 103-106 (GFPR), and Q110 each bind AMP. Residues 143–176 (SRYICPACQGIYNEQQGFSSCPKCSVELIRRSDD) are LID. Position 144 (R144) interacts with ATP. Residues C147 and C150 each coordinate Zn(2+). Residue 153-154 (IY) participates in ATP binding. The Zn(2+) site is built by C163 and C166. AMP-binding residues include R173 and R184. A212 lines the ATP pocket.

This sequence belongs to the adenylate kinase family. Monomer.

Its subcellular location is the cytoplasm. The catalysed reaction is AMP + ATP = 2 ADP. It participates in purine metabolism; AMP biosynthesis via salvage pathway; AMP from ADP: step 1/1. In terms of biological role, catalyzes the reversible transfer of the terminal phosphate group between ATP and AMP. Plays an important role in cellular energy homeostasis and in adenine nucleotide metabolism. The sequence is that of Adenylate kinase from Chlamydia trachomatis serovar L2 (strain ATCC VR-902B / DSM 19102 / 434/Bu).